The chain runs to 137 residues: MPRILAIDYGQKRTGIAITDEMQIIASGLTTIASETSIAFLRDYFTKEKVEKVLIGEPKQMNGEPSQSTDIIEKFVTKFKNNFPDMAIERVDERFTSKMAFQTMIDSGLKKKQRQNKALVDEISATIMLQDYLTRKI.

This sequence belongs to the YqgF nuclease family.

Its subcellular location is the cytoplasm. Its function is as follows. Could be a nuclease involved in processing of the 5'-end of pre-16S rRNA. The protein is Putative pre-16S rRNA nuclease of Flavobacterium psychrophilum (strain ATCC 49511 / DSM 21280 / CIP 103535 / JIP02/86).